Consider the following 407-residue polypeptide: Argininosuccinate synthase (407 aa).

Residues Ala16–Ser24 and Ala44 contribute to the ATP site. The L-citrulline site is built by Tyr96 and Ser101. Gly126 lines the ATP pocket. Positions 128, 132, and 133 each coordinate L-aspartate. Asn132 contributes to the L-citrulline binding site. Positions 136, 185, 194, 270, and 282 each coordinate L-citrulline.

Belongs to the argininosuccinate synthase family. Type 1 subfamily. As to quaternary structure, homotetramer.

The protein localises to the cytoplasm. The catalysed reaction is L-citrulline + L-aspartate + ATP = 2-(N(omega)-L-arginino)succinate + AMP + diphosphate + H(+). It participates in amino-acid biosynthesis; L-arginine biosynthesis; L-arginine from L-ornithine and carbamoyl phosphate: step 2/3. The protein is Argininosuccinate synthase of Shewanella frigidimarina (strain NCIMB 400).